The primary structure comprises 199 residues: MDNCVAAKIMDSNLSSQQQHFLQPHCFFPQNVQQLSPAEEQQASKAKPIKRQRSASPELMRCKRRLNFNGFGYSLPQQQPAAVARRNERERNRVKLVNLGFATLREHVPNGAANKKMSKVETLRSAVEYIRALQQLLDEHDAVSAAFQSGVLSPTISPNYSHDMNSMAGSPVSSYSSDEGSYDPLSPEEQELLDFTTWF.

Positions 37 to 56 (PAEEQQASKAKPIKRQRSAS) are disordered. Residues 81–133 (AAVARRNERERNRVKLVNLGFATLREHVPNGAANKKMSKVETLRSAVEYIRAL) enclose the bHLH domain. Polar residues predominate over residues 162 to 179 (HDMNSMAGSPVSSYSSDE). The tract at residues 162–189 (HDMNSMAGSPVSSYSSDEGSYDPLSPEE) is disordered.

As to quaternary structure, efficient DNA binding requires dimerization with another bHLH protein. As to expression, neuronal precursor cells.

The protein localises to the nucleus. Transcription factor that plays a key role in neuronal differentiation: acts as a pioneer transcription factor, accessing closed chromatin to allow other factors to bind and activate neural pathways. Directly binds the E box motif (5'-CANNTG-3') on promoters and promotes transcription of neuronal genes. The combination of three transcription factors, ASCL1, POU3F2/BRN2 and MYT1L, is sufficient to reprogram fibroblasts and other somatic cells into induced neuronal (iN) cells in vitro. This is Achaete-scute homolog 1 (ascl1) from Xenopus laevis (African clawed frog).